A 135-amino-acid chain; its full sequence is Aspartate 1-decarboxylase (135 aa).

The active-site Schiff-base intermediate with substrate; via pyruvic acid is the serine 25. Pyruvic acid (Ser) is present on serine 25. A substrate-binding site is contributed by threonine 57. Tyrosine 58 (proton donor) is an active-site residue. 73 to 75 (GSA) provides a ligand contact to substrate.

Belongs to the PanD family. Heterooctamer of four alpha and four beta subunits. Pyruvate is required as a cofactor. Post-translationally, is synthesized initially as an inactive proenzyme, which is activated by self-cleavage at a specific serine bond to produce a beta-subunit with a hydroxyl group at its C-terminus and an alpha-subunit with a pyruvoyl group at its N-terminus.

The protein localises to the cytoplasm. It catalyses the reaction L-aspartate + H(+) = beta-alanine + CO2. It functions in the pathway cofactor biosynthesis; (R)-pantothenate biosynthesis; beta-alanine from L-aspartate: step 1/1. Catalyzes the pyruvoyl-dependent decarboxylation of aspartate to produce beta-alanine. This is Aspartate 1-decarboxylase from Albidiferax ferrireducens (strain ATCC BAA-621 / DSM 15236 / T118) (Rhodoferax ferrireducens).